The following is a 165-amino-acid chain: Large ribosomal subunit protein bL17 (165 aa).

A compositionally biased stretch (basic and acidic residues) spans 138–158; that stretch reads QEKREAQEKAREEKRTARKSD. Positions 138-165 are disordered; the sequence is QEKREAQEKAREEKRTARKSDSVPARKK.

This sequence belongs to the bacterial ribosomal protein bL17 family. As to quaternary structure, part of the 50S ribosomal subunit. Contacts protein L32.

The sequence is that of Large ribosomal subunit protein bL17 from Leptospira borgpetersenii serovar Hardjo-bovis (strain JB197).